A 485-amino-acid chain; its full sequence is Acetyl-coenzyme A carboxylase carboxyl transferase subunit beta, chloroplastic (485 aa).

In terms of domain architecture, CoA carboxyltransferase N-terminal spans 218-485 (LWIQCDNCYA…FFPLNKNEIK (268 aa)). Residues Cys-222, Cys-225, Cys-241, and Cys-244 each coordinate Zn(2+). The C4-type zinc-finger motif lies at 222 to 244 (CDNCYALIYKKALKFKMNVCEQC).

It belongs to the AccD/PCCB family. As to quaternary structure, acetyl-CoA carboxylase is a heterohexamer composed of biotin carboxyl carrier protein, biotin carboxylase and 2 subunits each of ACCase subunit alpha and ACCase plastid-coded subunit beta (accD). The cofactor is Zn(2+).

It is found in the plastid. It localises to the chloroplast stroma. The catalysed reaction is N(6)-carboxybiotinyl-L-lysyl-[protein] + acetyl-CoA = N(6)-biotinyl-L-lysyl-[protein] + malonyl-CoA. Its pathway is lipid metabolism; malonyl-CoA biosynthesis; malonyl-CoA from acetyl-CoA: step 1/1. Component of the acetyl coenzyme A carboxylase (ACC) complex. Biotin carboxylase (BC) catalyzes the carboxylation of biotin on its carrier protein (BCCP) and then the CO(2) group is transferred by the transcarboxylase to acetyl-CoA to form malonyl-CoA. The protein is Acetyl-coenzyme A carboxylase carboxyl transferase subunit beta, chloroplastic of Aethionema cordifolium (Lebanon stonecress).